Here is a 333-residue protein sequence, read N- to C-terminus: MANWLVLAEQVLGGHELTDEEALAILDCPDEELLLLLQGAYRIRSAYYGNKVKLNMIINAKSGLCPENCGYCSQSAVSTAPVKTYKMVDKETLLRGAEEAHRLRIGTYCIVASGRGPSDKEIDTVVSAVKEIKERFGLKVCACLGILKPEQAARLKEAGVDRYNHNINTSKQHHPNITTSHTYDDRVRTVETVKEAGLSPCSGVIIGMKETKRDVVDMARSLRALDADSIPVNFLHAIDGTPLAGTNELNPRYCLKVLALFRYMNPTKEIRIAGGREVNLRSLQPLGLYAANSIFVGDYLTTAGQEKSADYQMLEDLGFEIEFAPAPQAGVVS.

Residues 47-273 enclose the Radical SAM core domain; it reads YYGNKVKLNM…MNPTKEIRIA (227 aa). Cysteine 65, cysteine 69, and cysteine 72 together coordinate [4Fe-4S] cluster. 4 residues coordinate [2Fe-2S] cluster: cysteine 109, cysteine 141, cysteine 201, and arginine 271.

This sequence belongs to the radical SAM superfamily. Biotin synthase family. In terms of assembly, homodimer. It depends on [4Fe-4S] cluster as a cofactor. Requires [2Fe-2S] cluster as cofactor.

It catalyses the reaction (4R,5S)-dethiobiotin + (sulfur carrier)-SH + 2 reduced [2Fe-2S]-[ferredoxin] + 2 S-adenosyl-L-methionine = (sulfur carrier)-H + biotin + 2 5'-deoxyadenosine + 2 L-methionine + 2 oxidized [2Fe-2S]-[ferredoxin]. Its pathway is cofactor biosynthesis; biotin biosynthesis; biotin from 7,8-diaminononanoate: step 2/2. Functionally, catalyzes the conversion of dethiobiotin (DTB) to biotin by the insertion of a sulfur atom into dethiobiotin via a radical-based mechanism. In Geobacillus kaustophilus (strain HTA426), this protein is Biotin synthase.